Consider the following 332-residue polypeptide: RNA polymerase sigma-B factor (332 aa).

A Polymerase core binding motif is present at residues 125 to 138 (DLIQEGALGLERGV). A DNA-binding region (H-T-H motif) is located at residues 294-313 (LVQISQRMGISRERVRQVEK).

Belongs to the sigma-70 factor family.

In terms of biological role, sigma factors are initiation factors that promote the attachment of RNA polymerase to specific initiation sites and are then released. The sequence is that of RNA polymerase sigma-B factor (sigB) from Nostoc sp. (strain PCC 7120 / SAG 25.82 / UTEX 2576).